We begin with the raw amino-acid sequence, 412 residues long: Protein arginine N-methyltransferase 2 (412 aa).

Residues Thr-190–Ala-412 enclose the RMT2 domain. S-adenosyl-L-methionine-binding positions include Tyr-197, Met-227, Phe-250–Ile-255, Glu-271–His-273, Trp-298–Gln-299, and Asp-319.

This sequence belongs to the class I-like SAM-binding methyltransferase superfamily. RMT2 methyltransferase family. Monomer.

The protein resides in the cytoplasm. The protein localises to the nucleus. In terms of biological role, S-adenosyl-L-methionine-dependent protein-arginine N-methyltransferase that methylates the delta-nitrogen atom of arginine residues to form N5-methylarginine (type IV) in target proteins. Monomethylates ribosomal protein L12. This Candida glabrata (strain ATCC 2001 / BCRC 20586 / JCM 3761 / NBRC 0622 / NRRL Y-65 / CBS 138) (Yeast) protein is Protein arginine N-methyltransferase 2.